Consider the following 262-residue polypeptide: LOB domain-containing protein 18 (262 aa).

One can recognise an LOB domain in the interval 36-138; sequence GPCGACKFLR…AEVSYLQAHL (103 aa). The disordered stretch occupies residues 223 to 262; it reads VGLGGENSHDLQALAHELLHRQGSPPPAATDHSPSRTMSR.

Belongs to the LOB domain-containing protein family. Homodimer and heterodimer with LBD16. Interacts with GIP1. As to expression, expressed in roots, stems, leaves and flowers. Expressed in vascular tissues of hypocotyls, leaves, roots, developing floral organs and siliques.

It is found in the nucleus. Functionally, involved in the positive regulation of tracheary element (TE) differentiation. Involved in a positive feedback loop that maintains or promotes NAC030/VND7 expression that regulates TE differentiation-related genes. Functions in the initiation and emergence of lateral roots, in conjunction with LBD16, downstream of ARF7 and ARF19. Transcriptional activator that directly regulates EXPA14, a gene encoding a cell wall-loosening factor that promotes lateral root emergence. Activates EXPA14 by directly binding to a specific region of its promoter. Transcriptional activator that directly regulates EXPA17, a gene encoding a cell wall-loosening factor that promotes lateral root emergence. Acts downstream of the auxin influx carriers AUX1 and LAX1 in the regulation of lateral root initiation and development. This is LOB domain-containing protein 18 (LBD18) from Arabidopsis thaliana (Mouse-ear cress).